The sequence spans 163 residues: CASP-like protein 1C2 (163 aa).

Residues 1-6 (MAKSNK) lie on the Cytoplasmic side of the membrane. Residues 7–27 (IFTNTLRLLALAATVVAIVFM) form a helical membrane-spanning segment. The Extracellular segment spans residues 28–52 (VTSHDSAQVLNLTFTAKYSNTPAFK). N-linked (GlcNAc...) asparagine glycosylation occurs at asparagine 38. Residues 53–73 (FLVIGEAIAGGYTVISILLSF) traverse the membrane as a helical segment. Residues 74 to 79 (KGLFWR) are Cytoplasmic-facing. Residues 80–100 (LIVILDMVTTVLLTSSISAAL) form a helical membrane-spanning segment. Residues 101–128 (AIAQVGKKGNTHAGWLPICGQVPDFCDY) lie on the Extracellular side of the membrane. Residues 129–149 (VTIALIAGFAAAIIYFVLLLC) traverse the membrane as a helical segment. Residues 150 to 163 (SLYVVLSPIFVATP) lie on the Cytoplasmic side of the membrane.

The protein belongs to the Casparian strip membrane proteins (CASP) family. In terms of assembly, homodimer and heterodimers.

Its subcellular location is the cell membrane. The sequence is that of CASP-like protein 1C2 from Populus trichocarpa (Western balsam poplar).